We begin with the raw amino-acid sequence, 309 residues long: 15-cis-phytoene synthase (309 aa).

Positions 290–309 (LTSRMRAHPPRPAHLWQRPL) are disordered.

This sequence belongs to the phytoene/squalene synthase family. The cofactor is ATP. Requires Mn(2+) as cofactor. Mg(2+) serves as cofactor.

The catalysed reaction is 2 (2E,6E,10E)-geranylgeranyl diphosphate = 15-cis-phytoene + 2 diphosphate. It functions in the pathway carotenoid biosynthesis; phytoene biosynthesis. Its activity is regulated as follows. Inhibited by phosphate ions and squalestatin. In terms of biological role, involved in the biosynthesis of carotenoids. Catalyzes the condensation of two molecules of geranylgeranyl diphosphate (GGPP) to give prephytoene diphosphate (PPPP) and the subsequent rearrangement of the cyclopropylcarbinyl intermediate to yield the 15-cis-phytoene isomer. The sequence is that of 15-cis-phytoene synthase (crtB) from Pantoea ananas (Erwinia uredovora).